Reading from the N-terminus, the 198-residue chain is Holliday junction branch migration complex subunit RuvA (198 aa).

The segment at 1–63 is domain I; that stretch reads MYDYIKGQLT…EDAQLLFGFH (63 aa). A domain II region spans residues 64–142; it reads SEEEKDVFLK…EAPKEESSKL (79 aa). The flexible linker stretch occupies residues 143–147; the sequence is PKAKH. Residues 148 to 198 are domain III; the sequence is QENEQLDEAIEALLALGYKATELKKIRAFFEGTSETAEQYIKSALKMLMKG.

Belongs to the RuvA family. Homotetramer. Forms an RuvA(8)-RuvB(12)-Holliday junction (HJ) complex. HJ DNA is sandwiched between 2 RuvA tetramers; dsDNA enters through RuvA and exits via RuvB. An RuvB hexamer assembles on each DNA strand where it exits the tetramer. Each RuvB hexamer is contacted by two RuvA subunits (via domain III) on 2 adjacent RuvB subunits; this complex drives branch migration. In the full resolvosome a probable DNA-RuvA(4)-RuvB(12)-RuvC(2) complex forms which resolves the HJ.

The protein localises to the cytoplasm. The RuvA-RuvB-RuvC complex processes Holliday junction (HJ) DNA during genetic recombination and DNA repair, while the RuvA-RuvB complex plays an important role in the rescue of blocked DNA replication forks via replication fork reversal (RFR). RuvA specifically binds to HJ cruciform DNA, conferring on it an open structure. The RuvB hexamer acts as an ATP-dependent pump, pulling dsDNA into and through the RuvAB complex. HJ branch migration allows RuvC to scan DNA until it finds its consensus sequence, where it cleaves and resolves the cruciform DNA. This Streptococcus equi subsp. zooepidemicus (strain MGCS10565) protein is Holliday junction branch migration complex subunit RuvA.